A 701-amino-acid chain; its full sequence is Polyribonucleotide nucleotidyltransferase (701 aa).

Positions 485 and 491 each coordinate Mg(2+). The region spanning 552 to 611 is the KH domain; the sequence is PRIIKIRINPEKIRDVIGKGGAVIRALTEETGTTIDITDDGTVMIACVNAEGGELAKKRI. The region spanning 621–689 is the S1 motif domain; sequence GRVYDGTVLK…DKGRLRLSMK (69 aa).

Belongs to the polyribonucleotide nucleotidyltransferase family. Requires Mg(2+) as cofactor.

The protein localises to the cytoplasm. It catalyses the reaction RNA(n+1) + phosphate = RNA(n) + a ribonucleoside 5'-diphosphate. Involved in mRNA degradation. Catalyzes the phosphorolysis of single-stranded polyribonucleotides processively in the 3'- to 5'-direction. This Nitrosospira multiformis (strain ATCC 25196 / NCIMB 11849 / C 71) protein is Polyribonucleotide nucleotidyltransferase.